The sequence spans 528 residues: MPQTHEMSLNGTQYLKYELKDLESRAHDAKTPSTNEFYDDVESHGTEELVEAKLSFLNRIAAGLSAETKGIEPITEDEKTDDSILNAASMWFSANMVLPAYAIGALGPMVFDLNFGQSVFVIIFFNLLGLVSVAFFSVFGAELGLRQMILSRYLVGNIAARIFSFINFIACIGWGIVNTVASSQVLNMVNPGHQCPLWAGCIVIIGATVIVTFFGYGVIHAYEKWAWVPNFAVFLVIIARLARSKKFVLGEWTSGPTTAGNVLSFGSTVYGFAAGWTTYAADYTVYMPRKTNKYKIFFSLVVGLATPLYFTMILGAAVAMAAIGDPAWKTYYDENSIGGLTFAVLVPNSVHGFGQFCCVLLSLSTIANNVPNMYTIALSVQATWEPLAKVPRVIWTLLGNAAALGIAIPACYYFSTFMNYFMDSIGYYLAIYIAIACSEHFIYRRSFSAYNVDDWDSWERLPIGIAGTAALIVGAFGVALGMCQTYWVGEISRLIGDYGGDIGFELGLSWAFIVYNIARPFELKYFGR.

Over 1-90 the chain is Cytoplasmic; sequence MPQTHEMSLN…DDSILNAASM (90 aa). The residue at position 43 (serine 43) is a Phosphoserine. Residue threonine 46 is modified to Phosphothreonine. Residues 91–111 traverse the membrane as a helical segment; it reads WFSANMVLPAYAIGALGPMVF. At 112 to 118 the chain is on the extracellular side; that stretch reads DLNFGQS. A helical membrane pass occupies residues 119-139; that stretch reads VFVIIFFNLLGLVSVAFFSVF. Residues 140–161 are Cytoplasmic-facing; that stretch reads GAELGLRQMILSRYLVGNIAAR. Residues 162 to 182 traverse the membrane as a helical segment; that stretch reads IFSFINFIACIGWGIVNTVAS. Over 183–198 the chain is Extracellular; the sequence is SQVLNMVNPGHQCPLW. Residues 199-219 traverse the membrane as a helical segment; that stretch reads AGCIVIIGATVIVTFFGYGVI. Over 220-221 the chain is Cytoplasmic; the sequence is HA. A helical membrane pass occupies residues 222–242; sequence YEKWAWVPNFAVFLVIIARLA. At 243-260 the chain is on the extracellular side; the sequence is RSKKFVLGEWTSGPTTAG. Residues 261 to 281 traverse the membrane as a helical segment; the sequence is NVLSFGSTVYGFAAGWTTYAA. Residues 282–295 lie on the Cytoplasmic side of the membrane; it reads DYTVYMPRKTNKYK. A helical membrane pass occupies residues 296-316; that stretch reads IFFSLVVGLATPLYFTMILGA. At 317–340 the chain is on the extracellular side; it reads AVAMAAIGDPAWKTYYDENSIGGL. Residues 341 to 361 traverse the membrane as a helical segment; sequence TFAVLVPNSVHGFGQFCCVLL. The Cytoplasmic portion of the chain corresponds to 362-393; that stretch reads SLSTIANNVPNMYTIALSVQATWEPLAKVPRV. A helical membrane pass occupies residues 394 to 414; the sequence is IWTLLGNAAALGIAIPACYYF. Topologically, residues 415–416 are extracellular; the sequence is ST. A helical transmembrane segment spans residues 417–437; that stretch reads FMNYFMDSIGYYLAIYIAIAC. Residues 438–460 lie on the Cytoplasmic side of the membrane; it reads SEHFIYRRSFSAYNVDDWDSWER. A helical membrane pass occupies residues 461 to 481; that stretch reads LPIGIAGTAALIVGAFGVALG. Over 482–493 the chain is Extracellular; it reads MCQTYWVGEISR. Residues 494–514 traverse the membrane as a helical segment; that stretch reads LIGDYGGDIGFELGLSWAFIV. The Cytoplasmic portion of the chain corresponds to 515–528; the sequence is YNIARPFELKYFGR.

This sequence belongs to the purine-cytosine permease (2.A.39) family.

Its subcellular location is the membrane. In terms of biological role, probable purine-cytosine permease. The polypeptide is Purine-cytosine permease FCY21 (FCY21) (Saccharomyces cerevisiae (strain ATCC 204508 / S288c) (Baker's yeast)).